The primary structure comprises 99 residues: Acylphosphatase (99 aa).

Positions 5–97 (IRQVMISGRV…QPGERFSILS (93 aa)) constitute an Acylphosphatase-like domain. Residues Arg-20 and Asn-38 contribute to the active site.

The protein belongs to the acylphosphatase family.

The catalysed reaction is an acyl phosphate + H2O = a carboxylate + phosphate + H(+). This chain is Acylphosphatase (acyP), found in Rhodopseudomonas palustris (strain ATCC BAA-98 / CGA009).